The primary structure comprises 472 residues: 3-isopropylmalate dehydratase large subunit (472 aa).

Residues Cys-346, Cys-406, and Cys-409 each coordinate [4Fe-4S] cluster.

It belongs to the aconitase/IPM isomerase family. LeuC type 1 subfamily. In terms of assembly, heterodimer of LeuC and LeuD. Requires [4Fe-4S] cluster as cofactor.

The enzyme catalyses (2R,3S)-3-isopropylmalate = (2S)-2-isopropylmalate. It participates in amino-acid biosynthesis; L-leucine biosynthesis; L-leucine from 3-methyl-2-oxobutanoate: step 2/4. In terms of biological role, catalyzes the isomerization between 2-isopropylmalate and 3-isopropylmalate, via the formation of 2-isopropylmaleate. In Thermus thermophilus (strain ATCC BAA-163 / DSM 7039 / HB27), this protein is 3-isopropylmalate dehydratase large subunit.